Reading from the N-terminus, the 444-residue chain is ATP-dependent protease ATPase subunit HslU (444 aa).

ATP is bound by residues Ile18, 60–65 (GVGKTE), Asp256, Glu322, and Arg394.

The protein belongs to the ClpX chaperone family. HslU subfamily. A double ring-shaped homohexamer of HslV is capped on each side by a ring-shaped HslU homohexamer. The assembly of the HslU/HslV complex is dependent on binding of ATP.

It is found in the cytoplasm. ATPase subunit of a proteasome-like degradation complex; this subunit has chaperone activity. The binding of ATP and its subsequent hydrolysis by HslU are essential for unfolding of protein substrates subsequently hydrolyzed by HslV. HslU recognizes the N-terminal part of its protein substrates and unfolds these before they are guided to HslV for hydrolysis. This Buchnera aphidicola subsp. Cinara cedri (strain Cc) protein is ATP-dependent protease ATPase subunit HslU.